The chain runs to 248 residues: 14-3-3 protein homolog 2 (248 aa).

Belongs to the 14-3-3 family.

In Echinococcus granulosus (Hydatid tapeworm), this protein is 14-3-3 protein homolog 2.